Consider the following 429-residue polypeptide: Adenylosuccinate synthetase (429 aa).

GTP is bound by residues 12-18 and 40-42; these read GDEGKGK and GHT. Catalysis depends on Asp-13, which acts as the Proton acceptor. The Mg(2+) site is built by Asp-13 and Gly-40. IMP contacts are provided by residues 13–16, 38–41, Thr-129, Arg-143, Gln-223, Thr-238, and Arg-302; these read DEGK and NAGH. His-41 (proton donor) is an active-site residue. 298–304 is a substrate binding site; sequence VVTGRKR. GTP is bound by residues Arg-304, 330–332, and 412–414; these read KLD and STS.

The protein belongs to the adenylosuccinate synthetase family. As to quaternary structure, homodimer. It depends on Mg(2+) as a cofactor.

It is found in the cytoplasm. It catalyses the reaction IMP + L-aspartate + GTP = N(6)-(1,2-dicarboxyethyl)-AMP + GDP + phosphate + 2 H(+). The protein operates within purine metabolism; AMP biosynthesis via de novo pathway; AMP from IMP: step 1/2. Its function is as follows. Plays an important role in the de novo pathway of purine nucleotide biosynthesis. Catalyzes the first committed step in the biosynthesis of AMP from IMP. The protein is Adenylosuccinate synthetase of Maricaulis maris (strain MCS10) (Caulobacter maris).